A 238-amino-acid chain; its full sequence is Glutamine amidotransferase-like protein chyE (238 aa).

One can recognise a Glutamine amidotransferase type-1 domain in the interval Lys-8–Glu-238. The active-site Nucleophile is the Cys-102. Catalysis depends on residues His-189 and Glu-191.

It belongs to the peptidase C26 family.

Its pathway is pigment biosynthesis. In terms of biological role, glutamine amidotransferase-like protein; part of the gene cluster that mediates the biosynthesis of the yellow pigment chrysogine. the NRPS chyA mediates the condensation of anthranilic acid and alanine into the intermediate 2-(2-aminopropanamido)benzoic acid. The remainder of the pathway is highly branched yielding at least 13 chrysogine-related compounds. The malonyl transferase chyE converts 2-(2-aminopropanamido)benzoic acid and 2-(2-aminopropanamido)benzamidine into 2-(2-(2-carboxyacetamido)propanamido)benzoic acid and 3-((1-((2-carbamoylphenyl)amino)-1-oxopropan-2-yl)amino)-3-oxopropanoic acid, respectively. ChyD is an amidase, being responsible for the amidation of the carboxylic acid moiety of 2-(2-aminopropanamido)benzoic acid, 2-(2-(2-carboxyacetamido)propanamido)benzoic acid and 2-(2-((4-amino-1-carboxy-4-oxobutyl)amino)propanamido)benzoic acid. ChyC is involved in the same reactions as ChyD, but plays a more minor role in the amidation reactions compared to chyD. The oxidoreductases chyH and chyM are involved in oxidation reactions that form N-pyruvoylanthranilamide from 2-(2-aminopropanamido)benzamidine and (1-((2-carbamoylphenyl)amino)-1-oxopropan-2-yl)glutamine, respectively. N-pyruvoylanthranilamide is further converted via two further branches in the pathway, yielding chrysogine and additional chrysogine-related coumpounds. Chrysogine is likely formed by a spontaneous ring closure from N-pyruvoylanthranilamide. The chain is Glutamine amidotransferase-like protein chyE from Penicillium rubens (strain ATCC 28089 / DSM 1075 / NRRL 1951 / Wisconsin 54-1255) (Penicillium chrysogenum).